A 732-amino-acid polypeptide reads, in one-letter code: DNA gyrase subunit B, mitochondrial (732 aa).

The 108-residue stretch at 513–620 (SEIFIVEGDS…RYQRALFDAG (108 aa)) folds into the Toprim domain. Residues Glu519, Asp593, and Asp595 each coordinate Mg(2+).

This sequence belongs to the type II topoisomerase GyrB family. Made up of two chains. The A chain is responsible for DNA breakage and rejoining; the B chain catalyzes ATP hydrolysis. The cofactor is Mg(2+). Mn(2+) serves as cofactor. Ca(2+) is required as a cofactor.

The protein localises to the mitochondrion. It catalyses the reaction ATP-dependent breakage, passage and rejoining of double-stranded DNA.. Its function is as follows. A type II topoisomerase that negatively supercoils closed circular double-stranded DNA in an ATP-dependent manner. This is DNA gyrase subunit B, mitochondrial (GYRBM) from Arabidopsis thaliana (Mouse-ear cress).